Reading from the N-terminus, the 215-residue chain is Adenylate kinase (215 aa).

10-15 lines the ATP pocket; that stretch reads GAGKGT. Residues 30–59 are NMP; it reads STGDMFRAAMKNNTELGRKAKSFMDNGDLV. AMP contacts are provided by residues T31, R36, 57–59, 85–88, and Q92; these read DLV and GFPR. The tract at residues 126–163 is LID; sequence GRWICRTCGKTYHEIYNPPKVAGKCDLDGGELYQRDDD. R127 contacts ATP. Positions 130 and 133 each coordinate Zn(2+). Position 136–137 (136–137) interacts with ATP; the sequence is TY. Residues C150 and D153 each coordinate Zn(2+). AMP contacts are provided by R160 and R171. An ATP-binding site is contributed by Q199.

This sequence belongs to the adenylate kinase family. As to quaternary structure, monomer.

The protein localises to the cytoplasm. It catalyses the reaction AMP + ATP = 2 ADP. It participates in purine metabolism; AMP biosynthesis via salvage pathway; AMP from ADP: step 1/1. Its function is as follows. Catalyzes the reversible transfer of the terminal phosphate group between ATP and AMP. Plays an important role in cellular energy homeostasis and in adenine nucleotide metabolism. The chain is Adenylate kinase from Listeria monocytogenes serotype 4a (strain HCC23).